The following is a 912-amino-acid chain: MGDSRDLCPHLDSIGEVTKEDLLLKSKSTCQSCGVSGPNLWACLQVSCSYVGCGESFADHSTLHAQAKKHNLTVNLTTFRVWCYACEKEVFLEPRLAAHPPGPAPKFSEQDSPPPSHPLKAVPIAVADEGESESEDDDLKPRGLTGMKNLGNSCYMNAALQALSNCPPLTQFFLECGGLVRTDKKPALCKSYQKLVSEVWHRKRPSYVVPTSLSHGIKLVNPMFRGYAQQDTQEFLRCLMDQLHEELKEPVVATAAALTEARDSDSSDTDEKREGDRSPSEDEFLSCDSSSDRGEGDGQGRSGGGSQAEAELLMADEAGRAISEKERMKDRKFSWGQQRTNSEQVDEDADVDTAMAALEQQPPETQPPSPRSTSPCRTPEPDNEAHMRSSRPCSPVHHHEGHAKLASSPHRASPVRMGPAYVLKKAQVPGSRRRKEQSYRSVISDIFDGSVLSLVQCLTCDRVSTTVETFQDLSLPIPGKEDLAKLHSAIYQNVPAKPGACGDSYVAQGWLAFIVEYIRRFVVSCTPSWFWGPVVTLEDCLAAFFAADELKGDNMYSCERCKKLRNGVKYCKVLRLPEILCIHLKRFRHEVMYSFKISSHVSFPLEGLDLRPFLAKECTSQITTYDLLSVICHHGTAGSGHYIAYCQNVINGQWYEFDDQYVTEVHETVVQNAEAYVLFYRKSSEEAVRERQQVVSLAAMREPSLLRFYVSREWLNKFNTFAEPGPITNHTFLCSHGGIPPNKYHYIDDLVVILPQNVWEHLYSRFGGGPAVNHLYVCSICQVEIEALAKRRRVEIDTFIKLNKAFQAEESPSVIYCISMQWFREWEAFVKGKDNEPPGPIDNSRIAQVKGSGHIQLKPGADYGQISEETWVYLNNLYGGGPEIAIRQSVAQLPDPESLHGEQKIEAETRAL.

The UBP-type zinc-finger motif lies at 6-111; it reads DLCPHLDSIG…GPAPKFSEQD (106 aa). Zn(2+) contacts are provided by Cys8, His10, Cys30, Cys33, Cys43, Cys48, Cys53, His60, His64, His70, Cys83, and Cys86. The tract at residues 101 to 120 is disordered; sequence PGPAPKFSEQDSPPPSHPLK. 3 positions are modified to phosphoserine: Ser112, Ser132, and Ser134. In terms of domain architecture, USP spans 145-683; the sequence is TGMKNLGNSC…EAYVLFYRKS (539 aa). Cys154 serves as the catalytic Nucleophile. 2 disordered regions span residues 258–308 and 322–415; these read LTEA…GSQA and ISEK…ASPV. Phosphothreonine is present on Thr259. Over residues 260 to 280 the composition is skewed to basic and acidic residues; that stretch reads EARDSDSSDTDEKREGDRSPS. Ser306 carries the phosphoserine modification. Residues 322–333 show a composition bias toward basic and acidic residues; sequence ISEKERMKDRKF. Phosphoserine is present on Ser369. Thr378 is subject to Phosphothreonine. A phosphoserine mark is found at Ser408 and Ser413. Catalysis depends on His641, which acts as the Proton acceptor. DUSP domains lie at 685 to 778 and 787 to 890; these read EEAV…LYVC and ALAK…RQSV.

This sequence belongs to the peptidase C19 family. USP20/USP33 subfamily. As to quaternary structure, interacts with VHL, leading to its ubiquitination and subsequent degradation. Interacts with CCP110. Interacts with DIO2. Interacts with HIF1A. Interacts with ADRB2. Interacts with USP18. In terms of processing, ubiquitinated via a VHL-dependent pathway for proteasomal degradation.

It localises to the cytoplasm. It is found in the endoplasmic reticulum. The protein localises to the perinuclear region. Its subcellular location is the cytoskeleton. The protein resides in the microtubule organizing center. It localises to the centrosome. The catalysed reaction is Thiol-dependent hydrolysis of ester, thioester, amide, peptide and isopeptide bonds formed by the C-terminal Gly of ubiquitin (a 76-residue protein attached to proteins as an intracellular targeting signal).. Deubiquitinating enzyme that plays a role in many cellular processes including autophagy, cellular antiviral response or membrane protein biogenesis. Attenuates TLR4-mediated NF-kappa-B signaling by cooperating with beta-arrestin-2/ARRB2 and inhibiting TRAF6 autoubiquitination. Promotes cellular antiviral responses by deconjugating 'Lys-33' and 'Lys-48'-linked ubiquitination of STING1 leading to its stabilization. Plays an essential role in autophagy induction by regulating the ULK1 stability through deubiquitination of ULK1. Acts as a positive regulator for NF-kappa-B activation by TNF-alpha through deubiquitinating 'Lys-48'-linked polyubiquitination of SQSTM1, leading to its increased stability. Acts as a regulator of G-protein coupled receptor (GPCR) signaling by mediating the deubiquitination beta-2 adrenergic receptor (ADRB2). Plays a central role in ADRB2 recycling and resensitization after prolonged agonist stimulation by constitutively binding ADRB2, mediating deubiquitination of ADRB2 and inhibiting lysosomal trafficking of ADRB2. Upon dissociation, it is probably transferred to the translocated beta-arrestins, possibly leading to beta-arrestins deubiquitination and disengagement from ADRB2. This suggests the existence of a dynamic exchange between the ADRB2 and beta-arrestins. Deubiquitinates DIO2, thereby regulating thyroid hormone regulation. Deubiquitinates HIF1A, leading to stabilize HIF1A and enhance HIF1A-mediated activity. Deubiquitinates MCL1, a pivotal member of the anti-apoptotic Bcl-2 protein family to regulate its stability. Within the endoplasmic reticulum, participates with USP33 in the rescue of post-translationally targeted membrane proteins that are inappropriately ubiquitinated by the cytosolic protein quality control in the cytosol. This chain is Ubiquitin carboxyl-terminal hydrolase 20 (USP20), found in Bos taurus (Bovine).